Consider the following 338-residue polypeptide: Phytanoyl-CoA dioxygenase, peroxisomal (338 aa).

The N-terminal 30 residues, M1–T30, are a transit peptide targeting the peroxisome. N6-succinyllysine is present on residues K59 and K108. 2-oxoglutarate-binding positions include K120, M157, H175–D177, and W193. Positions 175 and 177 each coordinate Fe cation. N6-succinyllysine occurs at positions 231 and 252. H264 lines the Fe cation pocket. 2-oxoglutarate-binding residues include S266 and R275. S317 bears the Phosphoserine mark.

This sequence belongs to the PhyH family. In terms of assembly, interacts with FKBP52. Interacts with PHYHIP. Fe cation is required as a cofactor. L-ascorbate serves as cofactor. The cofactor is ATP. It depends on Mg(2+) as a cofactor. In terms of tissue distribution, expressed in liver, kidney, and T-cells, but not in spleen, brain, heart, lung and skeletal muscle.

It localises to the peroxisome. It carries out the reaction phytanoyl-CoA + 2-oxoglutarate + O2 = 2-hydroxyphytanoyl-CoA + succinate + CO2. It catalyses the reaction 3-methylhexadecanoyl-CoA + 2-oxoglutarate + O2 = 2-hydroxy-3-methylhexadecanoyl-CoA + succinate + CO2. The enzyme catalyses hexadecanoyl-CoA + 2-oxoglutarate + O2 = 2-hydroxyhexadecanoyl-CoA + succinate + CO2. The catalysed reaction is octanoyl-CoA + 2-oxoglutarate + O2 = 2-hydroxyoctanoyl-CoA + succinate + CO2. It carries out the reaction decanoyl-CoA + 2-oxoglutarate + O2 = 2-hydroxydecanoyl-CoA + succinate + CO2. It catalyses the reaction 3-methylbutanoyl-CoA + 2-oxoglutarate + O2 = 2-hydroxy-3-methylbutanoyl-CoA + succinate + CO2. The enzyme catalyses heptadecanoyl-CoA + 2-oxoglutarate + O2 = 2-hydroxyheptadecanoyl-CoA + succinate + CO2. The catalysed reaction is eicosanoyl-CoA + 2-oxoglutarate + O2 = 2-hydroxyeicosanoyl-CoA + succinate + CO2. It carries out the reaction octadecanoyl-CoA + 2-oxoglutarate + O2 = 2-hydroxyoctadecanoyl-CoA + succinate + CO2. It catalyses the reaction dodecanoyl-CoA + 2-oxoglutarate + O2 = 2-hydroxydodecanoyl-CoA + succinate + CO2. The enzyme catalyses tetradecanoyl-CoA + 2-oxoglutarate + O2 = 2-hydroxytetradecanoyl-CoA + succinate + CO2. The catalysed reaction is hexanoyl-CoA + 2-oxoglutarate + O2 = 2-hydroxyhexanoyl-CoA + succinate + CO2. It carries out the reaction butanoyl-CoA + 2-oxoglutarate + O2 = 2-hydroxybutanoyl-CoA + succinate + CO2. It catalyses the reaction 3-methylnonanoyl-CoA + 2-oxoglutarate + O2 = 2-hydroxy-3-methylnonanoyl-CoA + succinate + CO2. The enzyme catalyses 3-methylundecanoyl-CoA + 2-oxoglutarate + O2 = 2-hydroxy-3-methylundecanoyl-CoA + succinate + CO2. The catalysed reaction is 3-methyldodecanoyl-CoA + 2-oxoglutarate + O2 = 2-hydroxy-3-methyldodecanoyl-CoA + succinate + CO2. The protein operates within lipid metabolism; fatty acid metabolism. Its function is as follows. Catalyzes the 2-hydroxylation of not only racemic phytanoyl-CoA and the isomers of 3-methylhexadecanoyl-CoA, but also a variety of other mono-branched 3-methylacyl-CoA esters (with a chain length of at least seven carbon atoms) and straight-chain acyl-CoA esters (with a chain length longer than four carbon atoms). Does not hydroxylate long and very long straight chain acyl-CoAs or 2-methyl- and 4-methyl-branched acyl-CoAs. The sequence is that of Phytanoyl-CoA dioxygenase, peroxisomal (PHYH) from Homo sapiens (Human).